Reading from the N-terminus, the 459-residue chain is NADP-specific glutamate dehydrogenase (459 aa).

Residue K114 is part of the active site.

This sequence belongs to the Glu/Leu/Phe/Val dehydrogenases family. In terms of assembly, homohexamer.

It catalyses the reaction L-glutamate + NADP(+) + H2O = 2-oxoglutarate + NH4(+) + NADPH + H(+). The protein is NADP-specific glutamate dehydrogenase (gdhA) of Emericella nidulans (strain FGSC A4 / ATCC 38163 / CBS 112.46 / NRRL 194 / M139) (Aspergillus nidulans).